A 207-amino-acid polypeptide reads, in one-letter code: Ribosomal RNA small subunit methyltransferase G (207 aa).

S-adenosyl-L-methionine is bound by residues Gly-73, Leu-78, 124–125 (VE), and Arg-139.

Belongs to the methyltransferase superfamily. RNA methyltransferase RsmG family.

It localises to the cytoplasm. It carries out the reaction guanosine(527) in 16S rRNA + S-adenosyl-L-methionine = N(7)-methylguanosine(527) in 16S rRNA + S-adenosyl-L-homocysteine. Specifically methylates the N7 position of guanine in position 527 of 16S rRNA. This Shigella dysenteriae serotype 1 (strain Sd197) protein is Ribosomal RNA small subunit methyltransferase G.